Here is a 101-residue protein sequence, read N- to C-terminus: Urease subunit beta (101 aa).

This sequence belongs to the urease beta subunit family. Heterotrimer of UreA (gamma), UreB (beta) and UreC (alpha) subunits. Three heterotrimers associate to form the active enzyme.

Its subcellular location is the cytoplasm. The catalysed reaction is urea + 2 H2O + H(+) = hydrogencarbonate + 2 NH4(+). It functions in the pathway nitrogen metabolism; urea degradation; CO(2) and NH(3) from urea (urease route): step 1/1. This chain is Urease subunit beta, found in Burkholderia thailandensis (strain ATCC 700388 / DSM 13276 / CCUG 48851 / CIP 106301 / E264).